The primary structure comprises 189 residues: 3-isopropylmalate dehydratase small subunit (189 aa).

It belongs to the LeuD family. LeuD type 1 subfamily. As to quaternary structure, heterodimer of LeuC and LeuD.

The enzyme catalyses (2R,3S)-3-isopropylmalate = (2S)-2-isopropylmalate. It functions in the pathway amino-acid biosynthesis; L-leucine biosynthesis; L-leucine from 3-methyl-2-oxobutanoate: step 2/4. Its function is as follows. Catalyzes the isomerization between 2-isopropylmalate and 3-isopropylmalate, via the formation of 2-isopropylmaleate. In Staphylococcus epidermidis (strain ATCC 35984 / DSM 28319 / BCRC 17069 / CCUG 31568 / BM 3577 / RP62A), this protein is 3-isopropylmalate dehydratase small subunit.